We begin with the raw amino-acid sequence, 528 residues long: Chaperonin GroEL, chloroplastic (528 aa).

ATP-binding positions include 29–32 (TLGP), 86–90 (DGTTT), glycine 415, 481–483 (NAA), and aspartate 497.

The protein belongs to the chaperonin (HSP60) family. As to quaternary structure, forms a cylinder of 14 subunits composed of two heptameric rings stacked back-to-back. Interacts with the co-chaperonin GroES.

It is found in the plastid. The protein resides in the chloroplast. It carries out the reaction ATP + H2O + a folded polypeptide = ADP + phosphate + an unfolded polypeptide.. Its function is as follows. Together with its co-chaperonin GroES, plays an essential role in assisting protein folding. The GroEL-GroES system forms a nano-cage that allows encapsulation of the non-native substrate proteins and provides a physical environment optimized to promote and accelerate protein folding. The protein is Chaperonin GroEL, chloroplastic of Trieres chinensis (Marine centric diatom).